Here is a 100-residue protein sequence, read N- to C-terminus: Urease subunit gamma (100 aa).

Belongs to the urease gamma subunit family. As to quaternary structure, heterotrimer of UreA (gamma), UreB (beta) and UreC (alpha) subunits. Three heterotrimers associate to form the active enzyme.

Its subcellular location is the cytoplasm. It catalyses the reaction urea + 2 H2O + H(+) = hydrogencarbonate + 2 NH4(+). It participates in nitrogen metabolism; urea degradation; CO(2) and NH(3) from urea (urease route): step 1/1. This is Urease subunit gamma from Herpetosiphon aurantiacus (strain ATCC 23779 / DSM 785 / 114-95).